The following is a 239-amino-acid chain: MHCWCLQGAAFLPSILVIWSSAGFLFSYIISVLIGHVPPFVPYISDTGTSPPESGVFGFMISVSAMLGAATMYTRYMILERQNLSIDFLPIYFNKISLAIGLFGCIGMGIVATFQEMAVPAVHDAGALITFICGVMYILLQSYISYKSCPTWNTRATCHIRMTVSLIAFIAVVPMSVFSILSGRKRLDWKPSDEGYPYHLTSAICEWTVAFGFNMYFLTFIRDFQGVSIQISTEIHEDF.

6 consecutive transmembrane segments (helical) span residues 15-35 (ILVI…VLIG), 54-74 (SGVF…TMYT), 91-111 (IYFN…MGIV), 119-139 (VPAV…MYIL), 162-182 (MTVS…SILS), and 201-221 (TSAI…LTFI).

This sequence belongs to the DRAM/TMEM150 family.

Its subcellular location is the lysosome membrane. Its function is as follows. Lysosomal modulator of autophagy that plays a central role in p53/TP53-mediated apoptosis. This is DNA damage-regulated autophagy modulator protein 1 (dram1) from Xenopus laevis (African clawed frog).